Consider the following 230-residue polypeptide: Ribonuclease 3 (230 aa).

One can recognise an RNase III domain in the interval 10–133; that stretch reads DPRLLSRIGY…IIGAIYLDSG (124 aa). A Mg(2+)-binding site is contributed by E46. D50 is a catalytic residue. D119 and E122 together coordinate Mg(2+). E122 is a catalytic residue. One can recognise a DRBM domain in the interval 161 to 230; the sequence is DPKSRLQEYL…AAEILKLLEQ (70 aa).

It belongs to the ribonuclease III family. As to quaternary structure, homodimer. Mg(2+) is required as a cofactor.

Its subcellular location is the cytoplasm. The catalysed reaction is Endonucleolytic cleavage to 5'-phosphomonoester.. Its function is as follows. Digests double-stranded RNA. Involved in the processing of primary rRNA transcript to yield the immediate precursors to the large and small rRNAs (23S and 16S). Processes some mRNAs, and tRNAs when they are encoded in the rRNA operon. Processes pre-crRNA and tracrRNA of type II CRISPR loci if present in the organism. The chain is Ribonuclease 3 (rnc) from Acinetobacter pittii (strain PHEA-2).